Here is a 546-residue protein sequence, read N- to C-terminus: Probable protein kinase UbiB (546 aa).

Positions Asp-123 to Leu-501 constitute a Protein kinase domain. Residues Leu-129–Val-137 and Lys-152 contribute to the ATP site. Asp-287 (proton acceptor) is an active-site residue. Helical transmembrane passes span Gln-497 to Ile-517 and Tyr-521 to Trp-541.

The protein belongs to the ABC1 family. UbiB subfamily.

It localises to the cell inner membrane. It functions in the pathway cofactor biosynthesis; ubiquinone biosynthesis [regulation]. Functionally, is probably a protein kinase regulator of UbiI activity which is involved in aerobic coenzyme Q (ubiquinone) biosynthesis. In Blochmanniella pennsylvanica (strain BPEN), this protein is Probable protein kinase UbiB.